The chain runs to 171 residues: NADH-ubiquinone oxidoreductase chain 6 (171 aa).

Transmembrane regions (helical) follow at residues 1–21 (MYVM…ISSK), 25–44 (IYGG…IIMG), 49–71 (FMGL…YTTA), 85–105 (VVIW…VAWM), and 150–170 (WFAA…IEII).

It belongs to the complex I subunit 6 family. In terms of assembly, core subunit of respiratory chain NADH dehydrogenase (Complex I) which is composed of 45 different subunits.

It is found in the mitochondrion inner membrane. It catalyses the reaction a ubiquinone + NADH + 5 H(+)(in) = a ubiquinol + NAD(+) + 4 H(+)(out). Functionally, core subunit of the mitochondrial membrane respiratory chain NADH dehydrogenase (Complex I) which catalyzes electron transfer from NADH through the respiratory chain, using ubiquinone as an electron acceptor. Essential for the catalytic activity and assembly of complex I. This Lemur catta (Ring-tailed lemur) protein is NADH-ubiquinone oxidoreductase chain 6 (MT-ND6).